Here is a 141-residue protein sequence, read N- to C-terminus: Mite group 2 allergen Lep d 2 (141 aa).

The first 16 residues, 1–16 (MMKFIALFALVAVASA), serve as a signal peptide directing secretion. Intrachain disulfides connect Cys-24-Cys-133, Cys-37-Cys-42, and Cys-88-Cys-93. A run of 3 repeats spans residues 64 to 65 (KV), 68 to 69 (KV), and 72 to 73 (KV). The interval 64–73 (KVTIKVLAKV) is 3 X 2 AA repeats of K-V.

Belongs to the NPC2 family. Monomer.

Its subcellular location is the secreted. This Lepidoglyphus destructor (Storage mite) protein is Mite group 2 allergen Lep d 2.